Consider the following 776-residue polypeptide: Ion-translocating oxidoreductase complex subunit C (776 aa).

4Fe-4S ferredoxin-type domains lie at 368 to 397 (MGAP…QQLY) and 407 to 436 (KATA…VQYF). 8 residues coordinate [4Fe-4S] cluster: Cys-377, Cys-380, Cys-383, Cys-387, Cys-416, Cys-419, Cys-422, and Cys-426. Composition is skewed to basic and acidic residues over residues 534-543 (ARARQAEKVQ), 597-611 (ADEK…RKAA), 633-647 (ADEK…RKAA), 669-683 (ADEK…RKAA), and 705-719 (ADEK…RKAT). The interval 534-754 (ARARQAEKVQ…ENEAEDPRKA (221 aa)) is disordered. Residues 721–743 (EAAIARAKARKAAQAGERAQAAN) show a composition bias toward low complexity.

The protein belongs to the 4Fe4S bacterial-type ferredoxin family. RnfC subfamily. The complex is composed of six subunits: RnfA, RnfB, RnfC, RnfD, RnfE and RnfG. The cofactor is [4Fe-4S] cluster.

It is found in the cell inner membrane. Functionally, part of a membrane-bound complex that couples electron transfer with translocation of ions across the membrane. The chain is Ion-translocating oxidoreductase complex subunit C from Cronobacter sakazakii (strain ATCC BAA-894) (Enterobacter sakazakii).